The sequence spans 744 residues: Tripartite motif-containing protein 2 (744 aa).

Phosphoserine is present on serine 10. An RING-type zinc finger spans residues 23-64 (CSICLERYKNPKVLPCLHTFCERCLQNYIPAHSLTLSCPVCR). The B box-type zinc finger occupies 113–154 (GKPLSCPNHDGNVMDFYCQSCETAMCRECTEGEHAEHPTVPL). The Zn(2+) site is built by cysteine 118, histidine 121, cysteine 141, and histidine 146. The Filamin repeat unit spans residues 320–421 (TTNAVASETV…IRGSPFKLKV (102 aa)). Position 371 is a phosphothreonine (threonine 371). 3 positions are modified to phosphoserine: serine 375, serine 424, and serine 428. Residues 432-462 (EGVKRRVKSPGSGHVKQKAVKRPASMYSTGK) form a disordered region. 6 NHL repeats span residues 473–516 (IFRV…FSND), 520–563 (KSRF…FSSD), 564–605 (GKFK…FQPN), 609–652 (VTRF…FNQE), 656–699 (MLKF…FDGS), and 700–743 (GSFL…YRYL).

Belongs to the TRIM/RBCC family. Forms homooligomers. Interacts with TRIM3; this interaction reduces TRIM2 activity. Interacts with myosin V; myosin V may not be a substrate for ubiquitination. Interacts with NEFL. Interacts with phosphorylated BCL2L11. Interacts with SIRPA. In terms of processing, RING-type zinc finger-dependent and UBE2D1-dependent autoubiquitination.

It is found in the cytoplasm. It catalyses the reaction S-ubiquitinyl-[E2 ubiquitin-conjugating enzyme]-L-cysteine + [acceptor protein]-L-lysine = [E2 ubiquitin-conjugating enzyme]-L-cysteine + N(6)-ubiquitinyl-[acceptor protein]-L-lysine.. It functions in the pathway protein modification; protein ubiquitination. Its function is as follows. UBE2D1-dependent E3 ubiquitin-protein ligase that mediates the ubiquitination of NEFL and of phosphorylated BCL2L11. Plays a neuroprotective function. May play a role in neuronal rapid ischemic tolerance. Plays a role in antiviral immunity and limits New World arenavirus infection independently of its ubiquitin ligase activity. This chain is Tripartite motif-containing protein 2 (TRIM2), found in Bos taurus (Bovine).